A 119-amino-acid polypeptide reads, in one-letter code: Large ribosomal subunit protein bL20c (119 aa).

The protein belongs to the bacterial ribosomal protein bL20 family.

Its subcellular location is the plastid. The protein localises to the chloroplast. Its function is as follows. Binds directly to 23S ribosomal RNA and is necessary for the in vitro assembly process of the 50S ribosomal subunit. It is not involved in the protein synthesizing functions of that subunit. The protein is Large ribosomal subunit protein bL20c (rpl20) of Zea mays (Maize).